Consider the following 1083-residue polypeptide: Solute carrier family 12 member 7 (1083 aa).

Positions 1–55 (MPTNFTVVPVEARADGAGDEAAERTEEPESPESVDQTSPTPGDGNPRENSPFINN) are disordered. Topologically, residues 1-119 (MPTNFTVVPV…RREVKAPRMG (119 aa)) are cytoplasmic. Basic and acidic residues predominate over residues 12-27 (ARADGAGDEAAERTEE). Serine 30 and serine 33 each carry phosphoserine. Phosphothreonine is present on threonine 37. Serine 50 and serine 62 each carry phosphoserine. Residues 120–142 (TFIGVYLPCLQNILGVILFLRLT) traverse the membrane as a discontinuously helical segment. 2 residues coordinate K(+): asparagine 131 and isoleucine 132. Valine 135 is a binding site for chloride. The Extracellular segment spans residues 143-149 (WIVGAAG). The chain crosses the membrane as a helical span at residues 150 to 172 (VMESFLIVAMCCTCTMLTAISMS). At 173-196 (AIATNGVVPAGGSYYMISRSLGPE) the chain is on the cytoplasmic side. A helical membrane pass occupies residues 197–225 (FGGAVGLCFYLGTTFAGAMYILGTIEIFL). The Extracellular portion of the chain corresponds to 226–249 (TYISPSAAIFQAETADGEAAALLN). A run of 2 helical transmembrane segments spans residues 250-271 (NMRV…VGVK) and 272-300 (YVNK…KTAF). The Extracellular portion of the chain corresponds to 301 to 419 (APPDIPVCLL…PYVLTDIMTY (119 aa)). Asparagine 312 carries an N-linked (GlcNAc...) (high mannose) asparagine glycan. Asparagine 331 and asparagine 344 each carry an N-linked (GlcNAc...) (complex) asparagine glycan. N-linked (GlcNAc...) (high mannose) asparagine glycosylation is present at asparagine 360. A helical transmembrane segment spans residues 420–440 (FTMLVGIYFPSVTGIMAGSNR). Proline 429 and threonine 432 together coordinate K(+). Proline 429 contributes to the chloride binding site. Positions 433 and 434 each coordinate chloride. The Cytoplasmic segment spans residues 441-450 (SGDLKDAQKS). The chain crosses the membrane as a helical span at residues 451–473 (IPTGTILAIVTTSFIYLSCIVLF). At 474–504 (GACIEGVVLRDKFGEALQGNLVIGMLAWPSP) the chain is on the extracellular side. Residues 505 to 531 (WVIVIGSFFSTCGAGLQSLTGAPRLLQ) form a helical membrane-spanning segment. Residues 532–554 (AIARDGIIPFLQVFGHGKANGEP) lie on the Cytoplasmic side of the membrane. Transmembrane regions (helical) follow at residues 555-573 (TWAL…LIAS) and 574-598 (LDSV…ACAV). Position 589 (tyrosine 589) interacts with chloride. Topologically, residues 599-612 (QTLLRTPNWRPRFK) are cytoplasmic. Transmembrane regions (helical) follow at residues 613–635 (FYHW…ICSW) and 636–651 (YYAL…IYKY). At 652-1083 (IEYRGAEKEW…GGREVITIYS (432 aa)) the chain is on the cytoplasmic side. Residues 664 to 680 (GIRGLSLNAARYALLRV) are scissor helix. A phosphothreonine mark is found at threonine 973 and threonine 980.

It belongs to the SLC12A transporter family. K/Cl co-transporter subfamily. In terms of assembly, homodimer; adopts a domain-swap conformation at the scissor helices connecting the transmembrane domain and C-terminal domain. Heterodimer with K-Cl cotransporter SLC12A5. Post-translationally, glycosylation at Asn-331 and Asn-344 is required for proper trafficking to the cell surface, and augments protein stability. In terms of tissue distribution, detected in proximal tubules in the kidney, in particular in basolateral membranes of intercalated cells in the cortical collecting duct.

Its subcellular location is the cell membrane. The enzyme catalyses K(+)(in) + chloride(in) = K(+)(out) + chloride(out). Its activity is regulated as follows. Activated by N-ethylmaleimide (NEM). Inhibited by furosemide, DIDS and bumetanide. The inhibition is much stronger in the presence of 50 mM K(+) in the uptake medium. Inhibited by DIOA. Inhibited by WNK3. Mediates electroneutral potassium-chloride cotransport when activated by cell swelling. May mediate K(+) uptake into Deiters' cells in the cochlea and contribute to K(+) recycling in the inner ear. Important for the survival of cochlear outer and inner hair cells and the maintenance of the organ of Corti. May be required for basolateral Cl(-) extrusion in the kidney and contribute to renal acidification. The protein is Solute carrier family 12 member 7 (Slc12a7) of Mus musculus (Mouse).